A 289-amino-acid chain; its full sequence is Proteasome assembly chaperone 1 (289 aa).

The segment at 1-38 (MAATFFGEVVKAPCRAGTEEEEEEEEQSRRDTPEDREV) is disordered. Position 2 is an N-acetylalanine (A2). T18 bears the Phosphothreonine mark. Positions 27-38 (QSRRDTPEDREV) are enriched in basic and acidic residues. At T55 the chain carries Phosphothreonine. A Phosphoserine modification is found at S181. Residue K265 is modified to N6-acetyllysine.

This sequence belongs to the PSMG1 family. As to quaternary structure, forms a heterodimer with PSMG2. The PSMG1-PSMG2 heterodimer interacts directly with the PSMA5 and PSMA7 proteasome alpha subunits. Degraded by the proteasome upon completion of 20S proteasome maturation. Highly expressed in testis with moderate expression in brain, liver and kidney and low levels in heart, skeletal muscle and pancreas.

It is found in the cytoplasm. Its subcellular location is the endoplasmic reticulum. Functionally, chaperone protein which promotes assembly of the 20S proteasome as part of a heterodimer with PSMG2. The PSMG1-PSMG2 heterodimer binds to the PSMA5 and PSMA7 proteasome subunits, promotes assembly of the proteasome alpha subunits into the heteroheptameric alpha ring and prevents alpha ring dimerization. This Mus musculus (Mouse) protein is Proteasome assembly chaperone 1.